A 66-amino-acid chain; its full sequence is Movement protein TGBp3 (66 aa).

The Lumenal segment spans residues 1-2 (MD). Residues 3–23 (FTTLVIIGVYLLVFIVYFAKI) traverse the membrane as a helical segment. Residues 24–66 (NTSMCTISISGASVEISGCDNPALFEILPNLKPFDHGLSVPSI) lie on the Cytoplasmic side of the membrane.

This sequence belongs to the Tymovirales TGBp3 protein family.

It localises to the host endoplasmic reticulum membrane. Plays a role in viral cell-to-cell propagation, by facilitating genome transport to neighboring plant cells through plasmosdesmata. May induce the formation of granular vesicles derived from the Endoplasmic reticulum, which align on actin filaments. The polypeptide is Movement protein TGBp3 (Trifolium (WCMV)).